We begin with the raw amino-acid sequence, 380 residues long: Calreticulin-3 (380 aa).

The signal sequence occupies residues 1–19 (MVSARALLWAICVLRVALA). Residues 20-197 (TVYFQEEFLD…GQSIESGSIE (178 aa)) are N-domain. N-linked (GlcNAc...) asparagine glycosylation is present at asparagine 42. 4 residues coordinate an alpha-D-glucoside: tyrosine 109, lysine 111, tyrosine 128, and aspartate 135. Cysteine 137 and cysteine 163 are disulfide-bonded. A run of 7 repeats spans residues 191–202 (IESGSIEYDWNL), 209–220 (EKTSLDSRDWDQ), 222–231 (EGSKVQDWEK), 235–246 (DAGASKPSDWNS), 250–256 (GDWLQKP), 260–268 (DGLKAEGID), and 270–280 (DVWLHQKMRPA). The segment at 191–246 (IESGSIEYDWNLTSLRKTEKTSLDSRDWDQVEGSKVQDWEKHFLDAGASKPSDWNS) is 4 X approximate repeats. The tract at residues 198 to 291 (YDWNLTSLRK…YLTQYDLSEF (94 aa)) is P-domain. An N-linked (GlcNAc...) asparagine glycan is attached at asparagine 201. The interval 250 to 280 (GDWLQKPPYEDGLKAEGIDKDVWLHQKMRPA) is 3 X approximate repeats. Residues 292–380 (ENIGAIGLEL…FSRFHRQGEL (89 aa)) are C-domain. Residue glutamate 300 coordinates an alpha-D-glucoside. A Prevents secretion from ER motif is present at residues 377-380 (QGEL).

Belongs to the calreticulin family. In terms of assembly, component of an EIF2 complex at least composed of CELF1/CUGBP1, CALR, CALR3, EIF2S1, EIF2S2, HSP90B1 and HSPA5. Testis specific, absent in mature sperm.

It localises to the endoplasmic reticulum lumen. Functionally, CALR3 capacity for calcium-binding may be absent or much lower than that of CALR. During spermatogenesis, may act as a lectin-independent chaperone for specific client proteins such as ADAM3. Required for sperm fertility. The protein is Calreticulin-3 (Calr3) of Mus musculus (Mouse).